The primary structure comprises 82 residues: M-theraphotoxin-Gr1a (82 aa).

The signal sequence occupies residues 1 to 21 (MKTSVVFVIAGLALLSVVCYA). The propeptide occupies 22–46 (SELKEQSSVNEVLSTIFHFEQPEER). Disulfide bonds link cysteine 48/cysteine 63, cysteine 55/cysteine 69, and cysteine 62/cysteine 76. Phenylalanine 80 is modified (phenylalanine amide).

This sequence belongs to the neurotoxin 10 (Hwtx-1) family. 52 (MTx4) subfamily. In terms of tissue distribution, expressed by the venom gland.

Its subcellular location is the secreted. Its function is as follows. This cationic hydrophobic peptide acts on a lot of different channels and has an antimicrobial activity. It blocks mechanosensitive ion channels (also named stretch-activated channels or SACs), without having effect on whole-cell voltage-sensitive currents. It also affects acetylcholine receptors (nAChRs) through interactions with membrane lipids by prolonging the closing time without affecting channel conductance or opening activity. It shows high affinity for lipid bilayers. It acts by partitioning into the membrane and perturbing the interface between the channel and the lipid bilayer without necessarily being in physical contact with the channel. It inhibits atrial fibrillation as well as the membrane motor of outer hair cells at low doses. It also binds to the voltage sensor of voltage-gated potassium channels from the archaebacterium Aeropyrum pernix (KvAP) without affecting channel gating. It also shows a low inhibition on a large spectra of sodium channels (Nav1.1/SCN1A, Nav1.2/SCN2A, Nav1.3/SCN3A, Nav1.4/SCN4A, Nav1.5/SCN5A, Nav1.6/SCN8A, Nav1.7/SCN9A) (IC(50)=7.4-14 uM), and potassium channels Kv11.1/KCNH2 and Kv11.2/KCNH6 (IC(50)=11 uM for both). It exhibits antimicrobial activities against the Gram-positive bacteria B.subtilis (MIC=0.5 uM), S.aureus (MIC=2-4 uM), and S.epidermidis (MIC=4-8 uM), and Gram-negative bacteria S.typhimurium (MIC=32.64 uM), P.aeruginosa (MIC=8-16 uM), and E.coli (MIC=8-16 uM). The chain is M-theraphotoxin-Gr1a from Grammostola rosea (Chilean rose tarantula).